The following is a 149-amino-acid chain: Nucleoside diphosphate kinase (149 aa).

Lys-9, Phe-57, Arg-85, Thr-91, Arg-102, and Asn-112 together coordinate ATP. His-115 serves as the catalytic Pros-phosphohistidine intermediate.

Belongs to the NDK family. In terms of assembly, homotetramer. Requires Mg(2+) as cofactor.

The protein localises to the cytoplasm. The catalysed reaction is a 2'-deoxyribonucleoside 5'-diphosphate + ATP = a 2'-deoxyribonucleoside 5'-triphosphate + ADP. The enzyme catalyses a ribonucleoside 5'-diphosphate + ATP = a ribonucleoside 5'-triphosphate + ADP. In terms of biological role, major role in the synthesis of nucleoside triphosphates other than ATP. The ATP gamma phosphate is transferred to the NDP beta phosphate via a ping-pong mechanism, using a phosphorylated active-site intermediate. This chain is Nucleoside diphosphate kinase, found in Thermomicrobium roseum (strain ATCC 27502 / DSM 5159 / P-2).